The following is a 473-amino-acid chain: Cysteine--tRNA ligase (473 aa).

Cys-30 contacts Zn(2+). The 'HIGH' region signature appears at 32–42 (MTVYDYCHIGH). Residues Cys-213, His-238, and Glu-242 each coordinate Zn(2+). The short motif at 270-274 (KMSKS) is the 'KMSKS' region element. An ATP-binding site is contributed by Lys-273.

Belongs to the class-I aminoacyl-tRNA synthetase family. In terms of assembly, monomer. Zn(2+) serves as cofactor.

It is found in the cytoplasm. It catalyses the reaction tRNA(Cys) + L-cysteine + ATP = L-cysteinyl-tRNA(Cys) + AMP + diphosphate. The chain is Cysteine--tRNA ligase from Acinetobacter baumannii (strain SDF).